The following is a 458-amino-acid chain: Phosphoglucosamine mutase (458 aa).

Ser-106 functions as the Phosphoserine intermediate in the catalytic mechanism. Residues Ser-106, Asp-247, Asp-249, and Asp-251 each contribute to the Mg(2+) site. Residue Ser-106 is modified to Phosphoserine.

It belongs to the phosphohexose mutase family. It depends on Mg(2+) as a cofactor. In terms of processing, activated by phosphorylation.

It carries out the reaction alpha-D-glucosamine 1-phosphate = D-glucosamine 6-phosphate. Catalyzes the conversion of glucosamine-6-phosphate to glucosamine-1-phosphate. This Chlamydia pneumoniae (Chlamydophila pneumoniae) protein is Phosphoglucosamine mutase.